A 423-amino-acid polypeptide reads, in one-letter code: Enolase (423 aa).

Q163 contributes to the (2R)-2-phosphoglycerate binding site. The Proton donor role is filled by E205. 3 residues coordinate Mg(2+): D242, E285, and D312. (2R)-2-phosphoglycerate-binding residues include K337, R366, S367, and K388. The Proton acceptor role is filled by K337.

It belongs to the enolase family. It depends on Mg(2+) as a cofactor.

Its subcellular location is the cytoplasm. It localises to the secreted. The protein localises to the cell surface. The catalysed reaction is (2R)-2-phosphoglycerate = phosphoenolpyruvate + H2O. Its pathway is carbohydrate degradation; glycolysis; pyruvate from D-glyceraldehyde 3-phosphate: step 4/5. Its function is as follows. Catalyzes the reversible conversion of 2-phosphoglycerate (2-PG) into phosphoenolpyruvate (PEP). It is essential for the degradation of carbohydrates via glycolysis. The protein is Enolase of Desulforapulum autotrophicum (strain ATCC 43914 / DSM 3382 / VKM B-1955 / HRM2) (Desulfobacterium autotrophicum).